We begin with the raw amino-acid sequence, 239 residues long: tRNA (guanine-N(7)-)-methyltransferase (239 aa).

E69, E94, D121, and D144 together coordinate S-adenosyl-L-methionine. D144 is an active-site residue. Residues K148, D180, and 217-220 (TNFE) contribute to the substrate site.

Belongs to the class I-like SAM-binding methyltransferase superfamily. TrmB family. As to quaternary structure, monomer.

The enzyme catalyses guanosine(46) in tRNA + S-adenosyl-L-methionine = N(7)-methylguanosine(46) in tRNA + S-adenosyl-L-homocysteine. It participates in tRNA modification; N(7)-methylguanine-tRNA biosynthesis. Its function is as follows. Catalyzes the formation of N(7)-methylguanine at position 46 (m7G46) in tRNA. This Buchnera aphidicola subsp. Schizaphis graminum (strain Sg) protein is tRNA (guanine-N(7)-)-methyltransferase.